The sequence spans 755 residues: Protein phosphatase 1E (755 aa).

A disordered region spans residues 21-131 (EFRGPCGGGE…PPLPPLPRPL (111 aa)). 7 repeat units span residues 31–32 (PE), 33–34 (PE), 35–36 (PE), 37–38 (PE), 39–40 (PE), 41–42 (PE), and 43–44 (PE). The 11 X 2 AA tandem repeats of P-E stretch occupies residues 31 to 52 (PEPEPEPEPEPEPESEPEPEPE). 2 stretches are compositionally biased toward acidic residues: residues 31-68 (PEPEPEPEPEPEPESEPEPEPELVEAEAAEASVEEPGE) and 77-101 (EEGDQEQDPEPEEEAAVEGEEEEEG). An 8; approximate repeat occupies 45-46 (SE). Repeat copies occupy residues 47 to 48 (PE), 49 to 50 (PE), and 51 to 52 (PE). Residues 102–113 (AATAAAAPGHSA) are compositionally biased toward low complexity. Over residues 114–129 (VPPPPPQLPPLPPLPR) the composition is skewed to pro residues. Positions 231–488 (ETSIHAIKNM…DNITVIVVFL (258 aa)) constitute a PPM-type phosphatase domain. 4 residues coordinate Mn(2+): Asp-273, Gly-274, Asp-435, and Asp-479. The tract at residues 498 to 537 (SEESDWTENSFQGGQEDGGDDKENHGECKRPWPQHQCSAP) is disordered. Residues 518–527 (DKENHGECKR) show a composition bias toward basic and acidic residues. 2 positions are modified to phosphoserine: Ser-535 and Ser-548.

Belongs to the PP2C family. In terms of assembly, heterotrimer. Interacts with PAX1 and ARHGEF6 (or ARHGEF7). Mg(2+) serves as cofactor. Requires Mn(2+) as cofactor.

The protein resides in the nucleus. The protein localises to the cytoplasm. It carries out the reaction O-phospho-L-seryl-[protein] + H2O = L-seryl-[protein] + phosphate. The catalysed reaction is O-phospho-L-threonyl-[protein] + H2O = L-threonyl-[protein] + phosphate. Functionally, protein phosphatase that inactivates multifunctional CaM kinases such as CAMK4 and CAMK2. Dephosphorylates and inactivates PAK. May play a role in the inhibition of actin fiber stress breakdown and in morphological changes driven by TNK2/CDC42. Dephosphorylates PRKAA2. This is Protein phosphatase 1E (PPM1E) from Homo sapiens (Human).